Here is a 116-residue protein sequence, read N- to C-terminus: Large ribosomal subunit protein uL18 (116 aa).

Belongs to the universal ribosomal protein uL18 family. As to quaternary structure, part of the 50S ribosomal subunit; part of the 5S rRNA/L5/L18/L25 subcomplex. Contacts the 5S and 23S rRNAs.

In terms of biological role, this is one of the proteins that bind and probably mediate the attachment of the 5S RNA into the large ribosomal subunit, where it forms part of the central protuberance. The protein is Large ribosomal subunit protein uL18 of Psychrobacter arcticus (strain DSM 17307 / VKM B-2377 / 273-4).